Consider the following 995-residue polypeptide: Serine-aspartate repeat-containing protein C (995 aa).

The signal sequence occupies residues 1–50 (MNNKKTATNRKGMIPNRLNKFSIRKYSVGTASILVGTTLIFGLSGHEAKA). The YSIRK-G/S signaling motif motif lies at 21-32 (FSIRKYSVGTAS). Residues 51 to 164 (AEHTNGELNQ…STTPKTTTIK (114 aa)) are disordered. A ligand binding A region region spans residues 51 to 495 (AEHTNGELNQ…GSSTANGDQK (445 aa)). Over residues 56-71 (GELNQSKNETTAPSEN) the composition is skewed to polar residues. Basic and acidic residues predominate over residues 72–83 (KTTKKVDSRQLK). Polar residues predominate over residues 84-155 (DNTQTATADQ…SNLTQAKDVS (72 aa)). CNA-B domains are found at residues 496–606 (KYNL…YKTP) and 607–717 (KYSL…EEET). Positions 678–975 (TQTGTNTTED…NNSNNGTLFG (298 aa)) are disordered. Composition is skewed to acidic residues over residues 685-695 (TEDDKDADGGE) and 712-934 (YYEE…DSDS). Positions 958-962 (LPETG) match the LPXTG sorting signal motif. A compositionally biased stretch (low complexity) spans 960–975 (ETGSENNNSNNGTLFG). T961 is subject to Pentaglycyl murein peptidoglycan amidated threonine. Residues 962-995 (GSENNNSNNGTLFGGLFAALGSLLLFGRRKKQNK) constitute a propeptide, removed by sortase.

The protein belongs to the serine-aspartate repeat-containing protein (SDr) family. In terms of assembly, homodimerizes; via N2-Domain. Interacts with host NRXN1; this interaction mediates bacterial attachment to host cells.

It localises to the secreted. The protein resides in the cell wall. Cell surface-associated calcium-binding protein which plays an important role in adhesion and pathogenesis. Mediates interactions with components of the extracellular matrix such as host NRXN1 to promote bacterial adhesion. The sequence is that of Serine-aspartate repeat-containing protein C (sdrC) from Staphylococcus aureus (strain NCTC 8325 / PS 47).